The primary structure comprises 364 residues: Ribosomal RNA large subunit methyltransferase M (364 aa).

S-adenosyl-L-methionine contacts are provided by residues serine 187, 220 to 223 (CPGG), aspartate 239, aspartate 259, and aspartate 276. The active-site Proton acceptor is lysine 305.

Belongs to the class I-like SAM-binding methyltransferase superfamily. RNA methyltransferase RlmE family. RlmM subfamily. Monomer.

The protein localises to the cytoplasm. The catalysed reaction is cytidine(2498) in 23S rRNA + S-adenosyl-L-methionine = 2'-O-methylcytidine(2498) in 23S rRNA + S-adenosyl-L-homocysteine + H(+). Its function is as follows. Catalyzes the 2'-O-methylation at nucleotide C2498 in 23S rRNA. The chain is Ribosomal RNA large subunit methyltransferase M from Aeromonas hydrophila subsp. hydrophila (strain ATCC 7966 / DSM 30187 / BCRC 13018 / CCUG 14551 / JCM 1027 / KCTC 2358 / NCIMB 9240 / NCTC 8049).